Reading from the N-terminus, the 380-residue chain is Capsular polysaccharide biosynthesis glycosyltransferase CapM (380 aa).

Belongs to the glycosyltransferase group 1 family. Glycosyltransferase 4 subfamily.

It functions in the pathway capsule biogenesis; capsule polysaccharide biosynthesis. Required for the biosynthesis of type 1 capsular polysaccharide. The protein is Capsular polysaccharide biosynthesis glycosyltransferase CapM (capM) of Staphylococcus aureus.